The primary structure comprises 186 residues: MHATSHEPAVWHGTTILTVRKGGRVVIGGDGQVSIGQTVIKSNARKVRKLGKGDVIGGFAGATADAFTLFERLESKLEQYPGQLTRAAVELAKDWRTDRYLRRLEAMMIVADKEVSLVLTGTGDVLEPEAGVMAIGSGGNYALAAARALIDTDKDAESIVRRSLDIAADICVYTNRNITIEALAAE.

Thr14 is a catalytic residue. Na(+) is bound by residues Ala168, Cys171, and Thr174.

It belongs to the peptidase T1B family. HslV subfamily. In terms of assembly, a double ring-shaped homohexamer of HslV is capped on each side by a ring-shaped HslU homohexamer. The assembly of the HslU/HslV complex is dependent on binding of ATP.

It localises to the cytoplasm. The catalysed reaction is ATP-dependent cleavage of peptide bonds with broad specificity.. Its activity is regulated as follows. Allosterically activated by HslU binding. Protease subunit of a proteasome-like degradation complex believed to be a general protein degrading machinery. This Bradyrhizobium sp. (strain BTAi1 / ATCC BAA-1182) protein is ATP-dependent protease subunit HslV.